Here is a 771-residue protein sequence, read N- to C-terminus: DNA polymerase 1 (771 aa).

It belongs to the DNA polymerase type-B family.

It carries out the reaction DNA(n) + a 2'-deoxyribonucleoside 5'-triphosphate = DNA(n+1) + diphosphate. The sequence is that of DNA polymerase 1 (polI) from Pyrococcus abyssi.